Reading from the N-terminus, the 25-residue chain is Small ribosomal subunit protein eS32 (25 aa).

Residues 1 to 25 form a disordered region; the sequence is MRAKWRKKRMRRLKRKRRKMRARSK.

It belongs to the eukaryotic ribosomal protein eS32 family. Component of the small ribosomal subunit.

The chain is Small ribosomal subunit protein eS32 (RpL41) from Spodoptera frugiperda (Fall armyworm).